The following is a 72-amino-acid chain: Translation initiation factor IF-1 (72 aa).

In terms of domain architecture, S1-like spans 1-72 (MAKEDTIQMQ…TRARIVFRAR (72 aa)).

This sequence belongs to the IF-1 family. Component of the 30S ribosomal translation pre-initiation complex which assembles on the 30S ribosome in the order IF-2 and IF-3, IF-1 and N-formylmethionyl-tRNA(fMet); mRNA recruitment can occur at any time during PIC assembly.

It localises to the cytoplasm. Its function is as follows. One of the essential components for the initiation of protein synthesis. Stabilizes the binding of IF-2 and IF-3 on the 30S subunit to which N-formylmethionyl-tRNA(fMet) subsequently binds. Helps modulate mRNA selection, yielding the 30S pre-initiation complex (PIC). Upon addition of the 50S ribosomal subunit IF-1, IF-2 and IF-3 are released leaving the mature 70S translation initiation complex. The polypeptide is Translation initiation factor IF-1 (Neisseria gonorrhoeae (strain ATCC 700825 / FA 1090)).